A 416-amino-acid polypeptide reads, in one-letter code: Adenylosuccinate synthetase (416 aa).

GTP-binding positions include 13–19 and 41–43; these read GDEGKGK and GHT. The active-site Proton acceptor is Asp-14. Residues Asp-14 and Gly-41 each coordinate Mg(2+). IMP-binding positions include 14 to 17, 39 to 42, Thr-126, Arg-140, Gln-220, Thr-235, and Arg-299; these read DEGK and NAGH. His-42 serves as the catalytic Proton donor. Substrate is bound at residue 295-301; the sequence is VSTGRKR. GTP contacts are provided by residues Arg-301, 327 to 329, and 405 to 407; these read KLD and STS.

It belongs to the adenylosuccinate synthetase family. Homodimer. Requires Mg(2+) as cofactor.

The protein resides in the cytoplasm. It catalyses the reaction IMP + L-aspartate + GTP = N(6)-(1,2-dicarboxyethyl)-AMP + GDP + phosphate + 2 H(+). The protein operates within purine metabolism; AMP biosynthesis via de novo pathway; AMP from IMP: step 1/2. Plays an important role in the de novo pathway of purine nucleotide biosynthesis. Catalyzes the first committed step in the biosynthesis of AMP from IMP. The polypeptide is Adenylosuccinate synthetase (Campylobacter jejuni subsp. jejuni serotype O:2 (strain ATCC 700819 / NCTC 11168)).